The sequence spans 58 residues: Small ribosomal subunit protein bS21A (58 aa).

The segment at 38-58 (YEKPSLRRKRKAEAARKGGRN) is disordered. Basic and acidic residues predominate over residues 49 to 58 (AEAARKGGRN).

The protein belongs to the bacterial ribosomal protein bS21 family.

The sequence is that of Small ribosomal subunit protein bS21A from Trichormus variabilis (strain ATCC 29413 / PCC 7937) (Anabaena variabilis).